The primary structure comprises 127 residues: Protein B20 (127 aa).

The segment at 86-127 (DRTGMNSESDSESDNISIKTEYENEYEFYDETQDQSTQHNDL) is disordered. Positions 108–118 (ENEYEFYDETQ) are enriched in acidic residues.

This chain is Protein B20, found in Homo sapiens (Human).